A 64-amino-acid chain; its full sequence is U-poneritoxin(01)-Om1a (64 aa).

Residues 1 to 27 (MKPSGLTFAFLVVFMMAIMYNSVQVTA) form the signal peptide. The propeptide occupies 28–45 (DADADAEAEALANALAEA). Met-62 carries the methionine amide modification.

In terms of processing, truncated sequences of this peptide have also been found in the venom. It is possible they have been cleaved in the venom. As to expression, expressed by the venom gland.

The protein resides in the secreted. In terms of biological role, antimicrobial peptide with activities against E.coli (MIC=1.3 uM), S.aureus (MIC=3.1 uM), and S.cerevisiae (MIC=50 uM). Also shows histamine-releasing activity (32.9% at 10 uM). Does not show hemolytic activity, even at 50 uM. It is a short peptide for which no alpha-helical region has been predicted. The chain is U-poneritoxin(01)-Om1a from Odontomachus monticola (Trap-jaw ant).